The primary structure comprises 655 residues: Serine/threonine-protein kinase SKM1 (655 aa).

The PH domain occupies glycine 3 to proline 118. The CRIB domain occupies valine 123–glycine 136. 2 stretches are compositionally biased toward basic and acidic residues: residues glutamate 265 to threonine 276 and lysine 318 to histidine 327. Residues glutamate 265–histidine 327 are disordered. Residues phenylalanine 360–leucine 639 form the Protein kinase domain. ATP is bound by residues alanine 366–valine 374 and lysine 406. The active-site Proton acceptor is the aspartate 507.

It belongs to the protein kinase superfamily. STE Ser/Thr protein kinase family. STE20 subfamily.

The catalysed reaction is L-seryl-[protein] + ATP = O-phospho-L-seryl-[protein] + ADP + H(+). It catalyses the reaction L-threonyl-[protein] + ATP = O-phospho-L-threonyl-[protein] + ADP + H(+). Its function is as follows. May be involved in cellular signaling or cytoskeletal functions. May play a role in morphogenetic control. This is Serine/threonine-protein kinase SKM1 (SKM1) from Saccharomyces cerevisiae (strain ATCC 204508 / S288c) (Baker's yeast).